The primary structure comprises 353 residues: Quinolinate synthase (353 aa).

Residues histidine 47 and serine 68 each coordinate iminosuccinate. Cysteine 113 lines the [4Fe-4S] cluster pocket. Iminosuccinate-binding positions include tyrosine 139–asparagine 141 and serine 156. Cysteine 200 contacts [4Fe-4S] cluster. Iminosuccinate is bound by residues histidine 226 to glutamate 228 and threonine 243. Cysteine 297 is a [4Fe-4S] cluster binding site.

It belongs to the quinolinate synthase family. Type 1 subfamily. The cofactor is [4Fe-4S] cluster.

Its subcellular location is the cytoplasm. The catalysed reaction is iminosuccinate + dihydroxyacetone phosphate = quinolinate + phosphate + 2 H2O + H(+). Its pathway is cofactor biosynthesis; NAD(+) biosynthesis; quinolinate from iminoaspartate: step 1/1. Catalyzes the condensation of iminoaspartate with dihydroxyacetone phosphate to form quinolinate. The polypeptide is Quinolinate synthase (Pectobacterium atrosepticum (strain SCRI 1043 / ATCC BAA-672) (Erwinia carotovora subsp. atroseptica)).